Consider the following 231-residue polypeptide: Biosynthetic peptidoglycan transglycosylase (231 aa).

A helical transmembrane segment spans residues 12–32 (LLAAFALLLLWQVWLFAQVAW).

This sequence belongs to the glycosyltransferase 51 family.

The protein localises to the cell inner membrane. It catalyses the reaction [GlcNAc-(1-&gt;4)-Mur2Ac(oyl-L-Ala-gamma-D-Glu-L-Lys-D-Ala-D-Ala)](n)-di-trans,octa-cis-undecaprenyl diphosphate + beta-D-GlcNAc-(1-&gt;4)-Mur2Ac(oyl-L-Ala-gamma-D-Glu-L-Lys-D-Ala-D-Ala)-di-trans,octa-cis-undecaprenyl diphosphate = [GlcNAc-(1-&gt;4)-Mur2Ac(oyl-L-Ala-gamma-D-Glu-L-Lys-D-Ala-D-Ala)](n+1)-di-trans,octa-cis-undecaprenyl diphosphate + di-trans,octa-cis-undecaprenyl diphosphate + H(+). It functions in the pathway cell wall biogenesis; peptidoglycan biosynthesis. Its function is as follows. Peptidoglycan polymerase that catalyzes glycan chain elongation from lipid-linked precursors. This chain is Biosynthetic peptidoglycan transglycosylase, found in Azoarcus sp. (strain BH72).